A 30-amino-acid polypeptide reads, in one-letter code: Trypsin inhibitor 4 (30 aa).

3 disulfides stabilise this stretch: C3–C20, C10–C22, and C16–C28.

It belongs to the protease inhibitor I7 (squash-type serine protease inhibitor) family.

The protein localises to the secreted. Its function is as follows. Inhibits trypsin; probably participates in a plant defense mechanism. The protein is Trypsin inhibitor 4 of Momordica charantia (Bitter gourd).